We begin with the raw amino-acid sequence, 360 residues long: Josephin-like protein (360 aa).

A Josephin domain is found at 5 to 192 (ESKIYHERQR…NQLPLASNYR (188 aa)). Cysteine 18 (nucleophile) is an active-site residue. Residue histidine 129 is the Proton acceptor of the active site.

It catalyses the reaction Thiol-dependent hydrolysis of ester, thioester, amide, peptide and isopeptide bonds formed by the C-terminal Gly of ubiquitin (a 76-residue protein attached to proteins as an intracellular targeting signal).. Its function is as follows. May act as a deubiquitinating enzyme. In Arabidopsis thaliana (Mouse-ear cress), this protein is Josephin-like protein.